We begin with the raw amino-acid sequence, 199 residues long: 3-hexulose-6-phosphate isomerase (199 aa).

An SIS domain is found at 44–186; the sequence is LARQIVQPGR…FQSLWDHTEV (143 aa). Residues Ser62 and 101-106 each bind substrate; that span reads SGSGTT. The Proton acceptor role is filled by Glu166.

This sequence belongs to the SIS family. PHI subfamily.

It catalyses the reaction D-arabino-hex-3-ulose 6-phosphate = beta-D-fructose 6-phosphate. It functions in the pathway one-carbon metabolism; formaldehyde assimilation via RuMP pathway; D-fructose 6-phosphate from D-ribulose 5-phosphate and formaldehyde: step 2/2. Catalyzes the isomerization between 3-hexulose 6-phosphate and fructose 6-phosphate. In Mycobacterium gastri, this protein is 3-hexulose-6-phosphate isomerase (rmpB).